A 309-amino-acid chain; its full sequence is Malate dehydrogenase (309 aa).

NAD(+) contacts are provided by residues 6 to 11 and Asp-31; that span reads GSGRVG. Residues Arg-80 and Arg-86 each contribute to the substrate site. NAD(+) is bound by residues Asn-93 and 116 to 118; that span reads TTN. Substrate-binding residues include Asn-118 and Arg-149. Residue His-173 is the Proton acceptor of the active site.

It belongs to the LDH/MDH superfamily. As to quaternary structure, homotetramer.

It catalyses the reaction (S)-malate + NAD(+) = oxaloacetate + NADH + H(+). Its function is as follows. Catalyzes the reversible oxidation of malate to oxaloacetate. Exhibits higher specific activity for oxaloacetate reduction than for malate oxidation in vitro. Has a strong preference for NAD. Can use NADPH for oxaloacetate reduction, but activity decreases more than 90%. No activity detected with NADP(+) and malate. This Pyrobaculum islandicum (strain DSM 4184 / JCM 9189 / GEO3) protein is Malate dehydrogenase.